We begin with the raw amino-acid sequence, 365 residues long: Endophilin-B1 (365 aa).

The residue at position 1 (M1) is an N-acetylmethionine. The tract at residues 1–30 is membrane-binding amphipathic helix; it reads MNIMDFNVKKLAADAGTFLSRAVQFTEEKL. The tract at residues 1-37 is required for membrane binding; it reads MNIMDFNVKKLAADAGTFLSRAVQFTEEKLGQAEKTE. The BAR domain occupies 27–261; that stretch reads EEKLGQAEKT…LGSFPSNYLS (235 aa). A Phosphothreonine; by CDK5 modification is found at T145. Residues 155-195 are a coiled coil; sequence YKTIAKERKLLQNKRLDLDAAKTRLKKAKAAETRNSSEQEL. One can recognise an SH3 domain in the interval 305-365; it reads SGSRKARVLY…VPITYLELLN (61 aa).

It belongs to the endophilin family. In terms of assembly, homodimer, and heterodimer with SH3GLB2. Binds BAX; induction of apoptosis augments BAX binding. Binds DNM1, HTT, AMPH, BIN1 and ARFGAP1. Interacts with UVRAG; UVRAG bridges the interaction to BECN1 indicative for an association with the PI3K complex II (PI3KC3-C2). Phosphorylated at Thr-145 by CDK5; this phosphorylation is required for autophagy induction in starved neurons and facilitates homodimerization. Highly expressed in heart, skeletal muscle, kidney and placenta. Detected at lower levels in brain, colon, thymus, spleen, liver, small intestine, lung and peripheral blood leukocytes.

It localises to the cytoplasm. The protein localises to the golgi apparatus membrane. The protein resides in the mitochondrion outer membrane. Its subcellular location is the cytoplasmic vesicle. It is found in the autophagosome membrane. It localises to the midbody. In terms of biological role, may be required for normal outer mitochondrial membrane dynamics. Required for coatomer-mediated retrograde transport in certain cells. May recruit other proteins to membranes with high curvature. May promote membrane fusion. Involved in activation of caspase-dependent apoptosis by promoting BAX/BAK1 activation. Isoform 1 acts proapoptotic in fibroblasts. Involved in caspase-independent apoptosis during nutrition starvation and involved in the regulation of autophagy. Activates lipid kinase activity of PIK3C3 during autophagy probably by associating with the PI3K complex II (PI3KC3-C2). Associated with PI3KC3-C2 during autophagy may regulate the trafficking of ATG9A from the Golgi complex to the peripheral cytoplasm for the formation of autophagosomes by inducing Golgi membrane tubulation and fragmentation. Involved in regulation of degradative endocytic trafficking and cytokinesis, probably in the context of PI3KC3-C2. Isoform 2 acts antiapoptotic in neuronal cells; involved in maintenance of mitochondrial morphology and promotes neuronal viability. The sequence is that of Endophilin-B1 (SH3GLB1) from Homo sapiens (Human).